Consider the following 169-residue polypeptide: Transcription antitermination protein NusB (169 aa).

The disordered stretch occupies residues 147 to 169; it reads RGLIDQSFSRPQKPESEATEIEE.

This sequence belongs to the NusB family.

Involved in transcription antitermination. Required for transcription of ribosomal RNA (rRNA) genes. Binds specifically to the boxA antiterminator sequence of the ribosomal RNA (rrn) operons. The sequence is that of Transcription antitermination protein NusB from Chlorobium chlorochromatii (strain CaD3).